The primary structure comprises 438 residues: Putative F-box protein At5g15660 (438 aa).

Residues 1-24 (MRRRSKKIKTENNSNPETSEERNK) form a disordered region. An F-box domain is found at 22 to 68 (RNKFDEIPHDLVIEILERLPLKSVARFLTVSKLWATTIRSPDFRKSY).

The protein is Putative F-box protein At5g15660 of Arabidopsis thaliana (Mouse-ear cress).